A 264-amino-acid polypeptide reads, in one-letter code: Anamorsin homolog 2 (264 aa).

Residues 1–142 are N-terminal SAM-like domain; that stretch reads MAATAAALAV…KVSWSMGSSF (142 aa). The linker stretch occupies residues 143–174; that stretch reads PLKKATKGLPKIQIDDDSELIDEDSLLTEDDL. [2Fe-2S] cluster is bound by residues cysteine 185, cysteine 194, cysteine 197, and cysteine 199. The segment at 185-199 is fe-S binding site A; it reads CEVGATRKACKNCTC. Residues cysteine 225, cysteine 228, cysteine 236, and cysteine 239 each contribute to the [4Fe-4S] cluster site. Short sequence motifs (cx2C motif) lie at residues 225–228 and 236–239; these read CGNC and CGTC. A fe-S binding site B region spans residues 225 to 239; it reads CGNCGLGDAFRCGTC.

The protein belongs to the anamorsin family. As to quaternary structure, monomer. [2Fe-2S] cluster is required as a cofactor. Requires [4Fe-4S] cluster as cofactor.

It is found in the cytoplasm. Its subcellular location is the mitochondrion intermembrane space. Component of the cytosolic iron-sulfur (Fe-S) protein assembly (CIA) machinery. Required for the maturation of extramitochondrial Fe-S proteins. Part of an electron transfer chain functioning in an early step of cytosolic Fe-S biogenesis, facilitating the de novo assembly of a [4Fe-4S] cluster on the cytosolic Fe-S scaffold complex. Electrons are transferred from NADPH via a FAD- and FMN-containing diflavin oxidoreductase. Together with the diflavin oxidoreductase, also required for the assembly of the diferric tyrosyl radical cofactor of ribonucleotide reductase (RNR), probably by providing electrons for reduction during radical cofactor maturation in the catalytic small subunit. This chain is Anamorsin homolog 2, found in Oryza sativa subsp. japonica (Rice).